Consider the following 303-residue polypeptide: MPEASSPRRTPQNVPYQDLPHLVNADGQYLFCRYWKPSGTPKALIFVSHGAGEHCGRYDELAHMLKGLDMLVFAHDHVGHGQSEGERMVVSDFQVFVRDVLQHVDTIQKDYPDVPIFLLGHSMGGAISILVAAERPTYFSGMVLISPLVLANPESASTLKVLAAKLLNFVLPNMTLGRIDSSVLSRNKSEVDLYNSDPLVCRAGLKVCFGIQLLNAVARVERAMPRLTLPFLLLQGSADRLCDSKGAYLLMESSRSQDKTLKMYEGAYHVLHRELPEVTNSVLHEVNSWVSHRIAAAGAGCPP.

A Phosphothreonine modification is found at Thr-10. Tyr-58 is modified (3'-nitrotyrosine). The Nucleophile role is filled by Ser-122. Ser-189 carries the phosphoserine modification. Active-site charge relay system residues include Asp-239 and His-269.

Belongs to the AB hydrolase superfamily. Monoacylglycerol lipase family. As to quaternary structure, homodimer. In terms of tissue distribution, ubiquitous.

The protein localises to the cytoplasm. It is found in the cytosol. It localises to the membrane. The enzyme catalyses Hydrolyzes glycerol monoesters of long-chain fatty acids.. The catalysed reaction is a 1-acylglycerol + H2O = glycerol + a fatty acid + H(+). It carries out the reaction a 2-acylglycerol + H2O = glycerol + a fatty acid + H(+). It catalyses the reaction 2-(5Z,8Z,11Z,14Z-eicosatetraenoyl)-glycerol + H2O = glycerol + (5Z,8Z,11Z,14Z)-eicosatetraenoate + H(+). The enzyme catalyses 1-octanoylglycerol + H2O = octanoate + glycerol + H(+). The catalysed reaction is 1-decanoylglycerol + H2O = decanoate + glycerol + H(+). It carries out the reaction 1-dodecanoylglycerol + H2O = dodecanoate + glycerol + H(+). It catalyses the reaction 1-tetradecanoylglycerol + H2O = tetradecanoate + glycerol + H(+). The enzyme catalyses 2-hexadecanoylglycerol + H2O = glycerol + hexadecanoate + H(+). The catalysed reaction is 1-(9Z-octadecenoyl)-glycerol + H2O = glycerol + (9Z)-octadecenoate + H(+). It carries out the reaction 2-(9Z-octadecenoyl)-glycerol + H2O = glycerol + (9Z)-octadecenoate + H(+). It catalyses the reaction 2-(9Z,12Z-octadecadienoyl)-glycerol + H2O = (9Z,12Z)-octadecadienoate + glycerol + H(+). The enzyme catalyses 1-(5Z,8Z,11Z,14Z-eicosatetraenoyl)-glycerol + H2O = glycerol + (5Z,8Z,11Z,14Z)-eicosatetraenoate + H(+). The catalysed reaction is 1-(9Z,12Z-octadecadienoyl)-glycerol + H2O = (9Z,12Z)-octadecadienoate + glycerol + H(+). It carries out the reaction 1-hexadecanoylglycerol + H2O = glycerol + hexadecanoate + H(+). It catalyses the reaction 1-octadecanoylglycerol + H2O = octadecanoate + glycerol + H(+). The enzyme catalyses prostaglandin E2 1-glyceryl ester + H2O = prostaglandin E2 + glycerol + H(+). The catalysed reaction is prostaglandin D2-1-glycerol ester + H2O = prostaglandin D2 + glycerol + H(+). It carries out the reaction 2-glyceryl-15-deoxy-Delta(12,14)-prostaglandin J2 + H2O = 15-deoxy-Delta(12,14)-prostaglandin J2 + glycerol + H(+). It catalyses the reaction prostaglandin F2alpha 1-glyceryl ester + H2O = prostaglandin F2alpha + glycerol + H(+). The protein operates within glycerolipid metabolism; triacylglycerol degradation. Functionally, converts monoacylglycerides to free fatty acids and glycerol. Hydrolyzes the endocannabinoid 2-arachidonoylglycerol, and thereby contributes to the regulation of endocannabinoid signaling, nociperception and perception of pain. Regulates the levels of fatty acids that serve as signaling molecules and promote cancer cell migration, invasion and tumor growth. This is Monoglyceride lipase from Mus musculus (Mouse).